A 322-amino-acid chain; its full sequence is Methionyl-tRNA formyltransferase (322 aa).

Residue 112–115 (SLLP) coordinates (6S)-5,6,7,8-tetrahydrofolate.

The protein belongs to the Fmt family.

The catalysed reaction is L-methionyl-tRNA(fMet) + (6R)-10-formyltetrahydrofolate = N-formyl-L-methionyl-tRNA(fMet) + (6S)-5,6,7,8-tetrahydrofolate + H(+). Its function is as follows. Attaches a formyl group to the free amino group of methionyl-tRNA(fMet). The formyl group appears to play a dual role in the initiator identity of N-formylmethionyl-tRNA by promoting its recognition by IF2 and preventing the misappropriation of this tRNA by the elongation apparatus. This chain is Methionyl-tRNA formyltransferase, found in Synechococcus sp. (strain JA-3-3Ab) (Cyanobacteria bacterium Yellowstone A-Prime).